Reading from the N-terminus, the 316-residue chain is Cysteine synthase (316 aa).

Residues N7 and R35 each coordinate hydrogen sulfide. At K42 the chain carries N6-(pyridoxal phosphate)lysine. Residues N72 and G177 to S181 contribute to the pyridoxal 5'-phosphate site. Hydrogen sulfide is bound at residue L268. S272 is a pyridoxal 5'-phosphate binding site.

It belongs to the cysteine synthase/cystathionine beta-synthase family. In terms of assembly, homodimer. It depends on pyridoxal 5'-phosphate as a cofactor.

It carries out the reaction O-acetyl-L-serine + hydrogen sulfide = L-cysteine + acetate. It functions in the pathway amino-acid biosynthesis; L-cysteine biosynthesis; L-cysteine from L-serine: step 2/2. The protein is Cysteine synthase (cysK) of Haemophilus influenzae (strain ATCC 51907 / DSM 11121 / KW20 / Rd).